Reading from the N-terminus, the 516-residue chain is Putative Rieske 2Fe-2S iron-sulfur protein MT3926 (516 aa).

The Rieske domain maps to 429 to 516 (LYTFFKCLTD…RGHQLRSSRP (88 aa)). [2Fe-2S] cluster-binding residues include Cys-469, His-471, Cys-489, and His-492.

Requires [2Fe-2S] cluster as cofactor.

In Mycobacterium tuberculosis (strain CDC 1551 / Oshkosh), this protein is Putative Rieske 2Fe-2S iron-sulfur protein MT3926.